Reading from the N-terminus, the 393-residue chain is S-adenosylmethionine synthase 2 (393 aa).

Residue Glu9 participates in Mg(2+) binding. His15 contributes to the ATP binding site. A K(+)-binding site is contributed by Glu43. L-methionine-binding residues include Glu56 and Gln99. Residues 167 to 169, 235 to 238, Asp246, 252 to 253, Ala269, Lys273, and Lys277 each bind ATP; these read DGK, SGRF, and RK. Asp246 serves as a coordination point for L-methionine. Residue Lys277 participates in L-methionine binding.

The protein belongs to the AdoMet synthase family. Homotetramer. It depends on Mn(2+) as a cofactor. Mg(2+) serves as cofactor. Co(2+) is required as a cofactor. Requires K(+) as cofactor.

The protein localises to the cytoplasm. It catalyses the reaction L-methionine + ATP + H2O = S-adenosyl-L-methionine + phosphate + diphosphate. It participates in amino-acid biosynthesis; S-adenosyl-L-methionine biosynthesis; S-adenosyl-L-methionine from L-methionine: step 1/1. Its function is as follows. Catalyzes the formation of S-adenosylmethionine from methionine and ATP. The reaction comprises two steps that are both catalyzed by the same enzyme: formation of S-adenosylmethionine (AdoMet) and triphosphate, and subsequent hydrolysis of the triphosphate. The protein is S-adenosylmethionine synthase 2 (METK2) of Vitis vinifera (Grape).